A 192-amino-acid polypeptide reads, in one-letter code: Xanthine phosphoribosyltransferase (192 aa).

Residues leucine 20 and asparagine 27 each coordinate xanthine. Residue 128–132 (ANGDA) participates in 5-phospho-alpha-D-ribose 1-diphosphate binding. Position 156 (lysine 156) interacts with xanthine.

Belongs to the purine/pyrimidine phosphoribosyltransferase family. Xpt subfamily. As to quaternary structure, homodimer.

Its subcellular location is the cytoplasm. It catalyses the reaction XMP + diphosphate = xanthine + 5-phospho-alpha-D-ribose 1-diphosphate. It participates in purine metabolism; XMP biosynthesis via salvage pathway; XMP from xanthine: step 1/1. Its function is as follows. Converts the preformed base xanthine, a product of nucleic acid breakdown, to xanthosine 5'-monophosphate (XMP), so it can be reused for RNA or DNA synthesis. This chain is Xanthine phosphoribosyltransferase, found in Staphylococcus aureus (strain Mu3 / ATCC 700698).